Here is a 134-residue protein sequence, read N- to C-terminus: ATP synthase epsilon chain (134 aa).

The protein belongs to the ATPase epsilon chain family. As to quaternary structure, F-type ATPases have 2 components, CF(1) - the catalytic core - and CF(0) - the membrane proton channel. CF(1) has five subunits: alpha(3), beta(3), gamma(1), delta(1), epsilon(1). CF(0) has three main subunits: a, b and c.

The protein localises to the cellular thylakoid membrane. Functionally, produces ATP from ADP in the presence of a proton gradient across the membrane. This is ATP synthase epsilon chain from Prochlorococcus marinus (strain MIT 9312).